The chain runs to 135 residues: MDISCYGWGNPLLFGTCPATTFRCSPGIQVIVFPFLLKGHSIVGLPTAKFSDLKRKTKRGSLGVYDGQCGVQPDDRFERLFDERMGGCIFGSIKDIRQQKQDVCELLEMVYEEDSSGTEGGWADGKVWREDYKDG.

Belongs to the UPF0329 family.

This chain is UPF0329 protein ECU07_1860/ECU10_0040/ECU11_2100, found in Encephalitozoon cuniculi (strain GB-M1) (Microsporidian parasite).